A 192-amino-acid chain; its full sequence is Probable nicotinate-nucleotide adenylyltransferase (192 aa).

The protein belongs to the NadD family.

The catalysed reaction is nicotinate beta-D-ribonucleotide + ATP + H(+) = deamido-NAD(+) + diphosphate. It participates in cofactor biosynthesis; NAD(+) biosynthesis; deamido-NAD(+) from nicotinate D-ribonucleotide: step 1/1. Its function is as follows. Catalyzes the reversible adenylation of nicotinate mononucleotide (NaMN) to nicotinic acid adenine dinucleotide (NaAD). This is Probable nicotinate-nucleotide adenylyltransferase from Cytophaga hutchinsonii (strain ATCC 33406 / DSM 1761 / CIP 103989 / NBRC 15051 / NCIMB 9469 / D465).